A 461-amino-acid chain; its full sequence is D-phenylhydantoinase (461 aa).

Histidine 59, histidine 61, and lysine 151 together coordinate a divalent metal cation. An N6-carboxylysine modification is found at lysine 151. Residue tyrosine 156 participates in substrate binding. Residues histidine 182 and histidine 239 each coordinate a divalent metal cation. Serine 286 serves as a coordination point for substrate. Aspartate 313 contributes to the a divalent metal cation binding site. A substrate-binding site is contributed by asparagine 335.

It belongs to the metallo-dependent hydrolases superfamily. Hydantoinase/dihydropyrimidinase family. Homotetramer. A divalent metal cation is required as a cofactor. In terms of processing, carboxylation allows a single lysine to coordinate two divalent metal cations.

The catalysed reaction is D-5-phenylhydantoin + H2O = N-carbamoyl-D-phenylglycine + H(+). Its function is as follows. Catalyzes the stereospecific hydrolysis of the cyclic amide bond of D-hydantoin derivatives with an aromatic side chains at the 5'-position. Has no activity on dihydropyrimidines. The physiological function is unknown. This Escherichia coli O17:K52:H18 (strain UMN026 / ExPEC) protein is D-phenylhydantoinase.